We begin with the raw amino-acid sequence, 46 residues long: Toxin PhcrTx2 (46 aa).

Cystine bridges form between Cys-4/Cys-40, Cys-6/Cys-32, and Cys-22/Cys-41.

Belongs to the sea anemone type 3 (BDS) potassium channel toxin family.

It localises to the secreted. It is found in the nematocyst. Functionally, neurotoxin that induces paralysis (but not death) to U.thayeri crabs. Partially and reversibly inhibits glutamate-evoked peak currents (IC(50)=4.7 uM) but not voltage-gated potassium channel currents in cultured isolated neurons from the land snail H.aspersa. Weakly inhibits voltage-gated potassium peak currents (IC(50)=6.4 uM) and steady-state currents (IC(50)=8.2 uM) in rat dorsal root ganglion (DRG) neurons. Weakly inhibits voltage-gated sodium currents in rat DRG neurons (IC(50)=0.9 uM). The polypeptide is Toxin PhcrTx2 (Phymanthus crucifer (Red beaded anemone)).